The chain runs to 100 residues: Aspartyl/glutamyl-tRNA(Asn/Gln) amidotransferase subunit C (100 aa).

This sequence belongs to the GatC family. Heterotrimer of A, B and C subunits.

It catalyses the reaction L-glutamyl-tRNA(Gln) + L-glutamine + ATP + H2O = L-glutaminyl-tRNA(Gln) + L-glutamate + ADP + phosphate + H(+). The catalysed reaction is L-aspartyl-tRNA(Asn) + L-glutamine + ATP + H2O = L-asparaginyl-tRNA(Asn) + L-glutamate + ADP + phosphate + 2 H(+). Allows the formation of correctly charged Asn-tRNA(Asn) or Gln-tRNA(Gln) through the transamidation of misacylated Asp-tRNA(Asn) or Glu-tRNA(Gln) in organisms which lack either or both of asparaginyl-tRNA or glutaminyl-tRNA synthetases. The reaction takes place in the presence of glutamine and ATP through an activated phospho-Asp-tRNA(Asn) or phospho-Glu-tRNA(Gln). The sequence is that of Aspartyl/glutamyl-tRNA(Asn/Gln) amidotransferase subunit C from Streptococcus pneumoniae (strain Hungary19A-6).